Reading from the N-terminus, the 887-residue chain is Alanine--tRNA ligase (887 aa).

Zn(2+) contacts are provided by His-581, His-585, Cys-683, and His-687.

Belongs to the class-II aminoacyl-tRNA synthetase family. It depends on Zn(2+) as a cofactor.

Its subcellular location is the cytoplasm. It carries out the reaction tRNA(Ala) + L-alanine + ATP = L-alanyl-tRNA(Ala) + AMP + diphosphate. Functionally, catalyzes the attachment of alanine to tRNA(Ala) in a two-step reaction: alanine is first activated by ATP to form Ala-AMP and then transferred to the acceptor end of tRNA(Ala). Also edits incorrectly charged Ser-tRNA(Ala) and Gly-tRNA(Ala) via its editing domain. The polypeptide is Alanine--tRNA ligase (Ehrlichia ruminantium (strain Welgevonden)).